The chain runs to 172 residues: Small ribosomal subunit protein uS5 (172 aa).

Positions Leu-15 to Ile-78 constitute an S5 DRBM domain.

The protein belongs to the universal ribosomal protein uS5 family. Part of the 30S ribosomal subunit. Contacts proteins S4 and S8.

Functionally, with S4 and S12 plays an important role in translational accuracy. Located at the back of the 30S subunit body where it stabilizes the conformation of the head with respect to the body. This is Small ribosomal subunit protein uS5 from Dehalococcoides mccartyi (strain ATCC BAA-2266 / KCTC 15142 / 195) (Dehalococcoides ethenogenes (strain 195)).